We begin with the raw amino-acid sequence, 594 residues long: DNA mismatch repair protein MutL (594 aa).

It belongs to the DNA mismatch repair MutL/HexB family.

Its function is as follows. This protein is involved in the repair of mismatches in DNA. It is required for dam-dependent methyl-directed DNA mismatch repair. May act as a 'molecular matchmaker', a protein that promotes the formation of a stable complex between two or more DNA-binding proteins in an ATP-dependent manner without itself being part of a final effector complex. This chain is DNA mismatch repair protein MutL, found in Rhizorhabdus wittichii (strain DSM 6014 / CCUG 31198 / JCM 15750 / NBRC 105917 / EY 4224 / RW1) (Sphingomonas wittichii).